A 145-amino-acid chain; its full sequence is D-aminoacyl-tRNA deacylase (145 aa).

Positions 137-138 match the Gly-cisPro motif, important for rejection of L-amino acids motif; the sequence is GP.

The protein belongs to the DTD family. As to quaternary structure, homodimer.

The protein resides in the cytoplasm. It catalyses the reaction glycyl-tRNA(Ala) + H2O = tRNA(Ala) + glycine + H(+). It carries out the reaction a D-aminoacyl-tRNA + H2O = a tRNA + a D-alpha-amino acid + H(+). Its function is as follows. An aminoacyl-tRNA editing enzyme that deacylates mischarged D-aminoacyl-tRNAs. Also deacylates mischarged glycyl-tRNA(Ala), protecting cells against glycine mischarging by AlaRS. Acts via tRNA-based rather than protein-based catalysis; rejects L-amino acids rather than detecting D-amino acids in the active site. By recycling D-aminoacyl-tRNA to D-amino acids and free tRNA molecules, this enzyme counteracts the toxicity associated with the formation of D-aminoacyl-tRNA entities in vivo and helps enforce protein L-homochirality. In Pseudomonas putida (strain GB-1), this protein is D-aminoacyl-tRNA deacylase.